The primary structure comprises 376 residues: Mitogen-activated protein kinase 4 (376 aa).

The Protein kinase domain maps to 43-329 (VPPLRPIGRG…VDEALCHPYL (287 aa)). ATP is bound by residues 49 to 57 (IGRGAYGIV) and Lys72. Asp169 functions as the Proton acceptor in the catalytic mechanism. Thr201 bears the Phosphothreonine mark. The TXY signature appears at 201-203 (TEY). Phosphotyrosine is present on Tyr203.

Belongs to the protein kinase superfamily. CMGC Ser/Thr protein kinase family. MAP kinase subfamily. Interacts with MEKK1, MKK1, MKK2 and MKK6. May form a ternary complex composed of MEKK1 and MKK1/MKK2 and MPK4. Interacts with MKS1 and AP2C1. May form a ternary or larger complex with MKS1 and WRKY25 and/or WRKY33. Interacts with MAP65-1. No interactions with RACK1A, RACK1B or RACK1C. Interacts directly with ASR3 and mediates its phosphorylation. Binds to MEKK2. Interacts with PAT1. Binds to HT1. Post-translationally, dually phosphorylated on Thr-201 and Tyr-203, which activates the enzyme. Autophosphorylated on serine and tyrosine residues. Dephosphorylated by DSPTP1. Phosphorylated by MKK6 in vitro. As to expression, ubiquitous. Expressed in the veins and stomatal guard cells of leaf plates, petioles, stem, roots and flowers.

It localises to the cytoplasm. The protein localises to the nucleus. It is found in the cytoskeleton. It carries out the reaction L-seryl-[protein] + ATP = O-phospho-L-seryl-[protein] + ADP + H(+). The enzyme catalyses L-threonyl-[protein] + ATP = O-phospho-L-threonyl-[protein] + ADP + H(+). Activated by threonine and tyrosine phosphorylation. Activated by the MAP kinase kinases MKK1 and MKK2. Activated in response to touch, wounding, low temperature, low humidity, salt stress and the bacterial elicitors flagellin and harpin. Activated upon Pseudomonas syringae pv. tomato DC3000 infection. Repressed by the protein phosphatase 2C AP2C1. Repressed by DSPTP1-mediated dephosphorylation. Activated by the MAP kinase kinase MKK6 in vitro. The ANPs-MKK6-MPK4 module is involved in the regulation of plant cytokinesis during meiosis and mitosis. Essential to promote the progression of cytokinesis and for cellularization (formation of the cell plate) during male-specific meiosis. Involved in cortical microtubules organization and stabilization by regulating the phosphorylation state of microtubule-associated proteins such as MAP65-1. Involved in root hair development process. Negative regulator of systemic acquired resistance (SAR) and salicylic acid- (SA) mediated defense response. Required for jasmonic acid- (JA) mediated defense gene expression. May regulate activity of transcription factor controlling pathogenesis-related (PR) gene expression. Seems to act independently of the SAR regulatory protein NPR1 (Nonexpresser of PR1). Phosphorylates MKS1 and transcription factors WRKY25 and WRKY33. The MEKK1, MKK1/MKK2 and MPK4 function in a signaling pathway that modulates the expression of genes responding to biotic and abiotic stresses and also plays an important role in pathogen defense by negatively regulating innate immunity. Phosphorylates MEKK2 upon treatment with flg22. Involved in stomatal movement regulation by repressing HT1 and HT1-mediated GHR1 phosphorylation. The polypeptide is Mitogen-activated protein kinase 4 (Arabidopsis thaliana (Mouse-ear cress)).